Here is a 196-residue protein sequence, read N- to C-terminus: Probable signal peptidase I-1 (196 aa).

The Cytoplasmic portion of the chain corresponds to 1-16 (MQNSPIPSPWQFIKEN). The chain crosses the membrane as a helical span at residues 17–35 (IPLLMVALVLALLLRFFVA). Residues 36–196 (EPRYIPSDSM…FVPARTIINT (161 aa)) are Periplasmic-facing. Catalysis depends on residues serine 44 and lysine 94.

Belongs to the peptidase S26 family.

Its subcellular location is the cell membrane. The catalysed reaction is Cleavage of hydrophobic, N-terminal signal or leader sequences from secreted and periplasmic proteins.. The polypeptide is Probable signal peptidase I-1 (lepB1) (Synechocystis sp. (strain ATCC 27184 / PCC 6803 / Kazusa)).